Here is a 621-residue protein sequence, read N- to C-terminus: pH-response transcription factor pacc-1 (621 aa).

A compositionally biased stretch (polar residues) spans methionine 1–glycine 14. The disordered stretch occupies residues methionine 1–proline 87. Low complexity predominate over residues alanine 15 to proline 87. 3 C2H2-type zinc fingers span residues leucine 95 to histidine 120, leucine 131 to histidine 155, and histidine 161 to histidine 183. Disordered regions lie at residues proline 395–tyrosine 539 and aspartate 566–asparagine 621. 2 stretches are compositionally biased toward low complexity: residues alanine 409–alanine 423 and serine 436–proline 465. The YPX[LI] motif 1 signature appears at tyrosine 464–leucine 467. Over residues proline 476–threonine 486 the composition is skewed to polar residues. The segment covering arginine 502–proline 511 has biased composition (basic and acidic residues). The segment covering alanine 515–serine 525 has biased composition (polar residues). Low complexity predominate over residues arginine 583–glutamine 595. The short motif at tyrosine 614–leucine 617 is the YPX[LI] motif 2 element.

The protein belongs to the pacC/RIM101 family. In terms of assembly, binds to DNA. Interacts with palA/prr-1, which binds to the two YPX[LI] motifs and is required for proteolytic processing. Activated by C-terminal proteolytic cleavage by signaling protease (probably palB/RIM13) at neutral to alkaline ambient pH.

It is found in the cytoplasm. It localises to the nucleus. In terms of biological role, transcription factor that mediates regulation of both acid- and alkaline-expressed genes in response to ambient pH. At alkaline ambient pH, activates transcription of alkaline-expressed genes (including pacc-1 itself) and represses transcription of acid-expressed genes. This Neurospora crassa (strain ATCC 24698 / 74-OR23-1A / CBS 708.71 / DSM 1257 / FGSC 987) protein is pH-response transcription factor pacc-1 (pacc-1).